We begin with the raw amino-acid sequence, 388 residues long: S-adenosylmethionine synthase (388 aa).

Residue histidine 16 coordinates ATP. Aspartate 18 lines the Mg(2+) pocket. Glutamate 44 contributes to the K(+) binding site. The L-methionine site is built by glutamate 57 and glutamine 100. The interval 100–110 (QSPDIAQGVDK) is flexible loop. Residues 167-169 (DAK), 233-234 (RF), aspartate 242, 248-249 (RK), alanine 265, and lysine 269 each bind ATP. Residue aspartate 242 participates in L-methionine binding. Position 273 (lysine 273) interacts with L-methionine.

The protein belongs to the AdoMet synthase family. In terms of assembly, homotetramer; dimer of dimers. Requires Mg(2+) as cofactor. It depends on K(+) as a cofactor.

Its subcellular location is the cytoplasm. The catalysed reaction is L-methionine + ATP + H2O = S-adenosyl-L-methionine + phosphate + diphosphate. It functions in the pathway amino-acid biosynthesis; S-adenosyl-L-methionine biosynthesis; S-adenosyl-L-methionine from L-methionine: step 1/1. Catalyzes the formation of S-adenosylmethionine (AdoMet) from methionine and ATP. The overall synthetic reaction is composed of two sequential steps, AdoMet formation and the subsequent tripolyphosphate hydrolysis which occurs prior to release of AdoMet from the enzyme. This chain is S-adenosylmethionine synthase, found in Polynucleobacter asymbioticus (strain DSM 18221 / CIP 109841 / QLW-P1DMWA-1) (Polynucleobacter necessarius subsp. asymbioticus).